We begin with the raw amino-acid sequence, 788 residues long: Cadherin-10 (788 aa).

The N-terminal stretch at 1–22 (MTIHQFLLLFLFWVCLPHFCSP) is a signal peptide. Positions 23–54 (EIMFRRTPVPQQRILSSRVPRSDGKILHRQKR) are excised as a propeptide. 5 consecutive Cadherin domains span residues 55–160 (GWMW…EPTF), 161–269 (PEEI…PPRF), 270–384 (PQNT…PPVF), 385–487 (SRSS…DNAP), and 488–606 (QFAV…LLLP). The Extracellular segment spans residues 55–613 (GWMWNQFFLL…LLPAGLSTGA (559 aa)). The N-linked (GlcNAc...) asparagine glycan is linked to N256. 3 N-linked (GlcNAc...) asparagine glycosylation sites follow: N438, N456, and N534. The chain crosses the membrane as a helical span at residues 614-634 (LIAILLCIIILLVIVVLFAAL). At 635–788 (KRQRKKEPLI…YGGGESDKDS (154 aa)) the chain is on the cytoplasmic side. A phosphoserine mark is found at S784 and S788.

As to expression, predominantly expressed in brain. Also found in adult and fetal kidney. Very low levels detected in prostate and fetal lung.

The protein localises to the cell membrane. Cadherins are calcium-dependent cell adhesion proteins. They preferentially interact with themselves in a homophilic manner in connecting cells; cadherins may thus contribute to the sorting of heterogeneous cell types. The chain is Cadherin-10 (CDH10) from Homo sapiens (Human).